The chain runs to 838 residues: Protein translocase subunit SecA (838 aa).

ATP-binding positions include Gln-86, 104 to 108, and Asp-493; that span reads GEGKT. Disordered stretches follow at residues 517-536 and 789-838; these read RRID…PGSS and KVAE…CCGQ. A compositionally biased stretch (basic and acidic residues) spans 801-819; sequence TDGDSKAKRQPVRKKETVG. Positions 824, 826, 835, and 836 each coordinate Zn(2+).

The protein belongs to the SecA family. As to quaternary structure, monomer and homodimer. Part of the essential Sec protein translocation apparatus which comprises SecA, SecYEG and auxiliary proteins SecDF. Other proteins may also be involved. It depends on Zn(2+) as a cofactor.

The protein localises to the cell membrane. It localises to the cytoplasm. It carries out the reaction ATP + H2O + cellular proteinSide 1 = ADP + phosphate + cellular proteinSide 2.. Part of the Sec protein translocase complex. Interacts with the SecYEG preprotein conducting channel. Has a central role in coupling the hydrolysis of ATP to the transfer of proteins into and across the cell membrane, serving as an ATP-driven molecular motor driving the stepwise translocation of polypeptide chains across the membrane. This chain is Protein translocase subunit SecA, found in Halalkalibacterium halodurans (strain ATCC BAA-125 / DSM 18197 / FERM 7344 / JCM 9153 / C-125) (Bacillus halodurans).